The chain runs to 808 residues: Digalactosyldiacylglycerol synthase 1, chloroplastic (808 aa).

The segment at 1–23 is disordered; the sequence is MVKETLIPPSSTSMTTGTSSSSS. Residues 1–58 constitute a chloroplast transit peptide; the sequence is MVKETLIPPSSTSMTTGTSSSSSLSMTLSSTNALSFLSKGWREVWDSADADLQLMRDR. Residues 10–23 show a composition bias toward low complexity; it reads SSTSMTTGTSSSSS.

This sequence belongs to the glycosyltransferase group 1 family. Glycosyltransferase 4 subfamily.

It is found in the plastid. It localises to the chloroplast outer membrane. It catalyses the reaction a 1,2-diacyl-3-O-(beta-D-galactosyl)-sn-glycerol + UDP-alpha-D-galactose = a 1,2-diacyl-3-O-[alpha-D-galactosyl-(1-&gt;6)-beta-D-galactosyl]-sn-glycerol + UDP + H(+). Involved in the synthesis of diacylglycerol galactolipids that are specifically found in thylakoid membranes. Specific for alpha-glycosidic linkages. Responsible for the final assembly of galactolipids in photosynthetic membranes. Digalactosyldiacylglycerol (DGDG) provides stability to the photosystem I (PSI) complex, especially to the PsaA, PsaB, PsaC, PsaL and PsaH subunits. This is Digalactosyldiacylglycerol synthase 1, chloroplastic from Arabidopsis thaliana (Mouse-ear cress).